The following is a 382-amino-acid chain: Proton extrusion protein PxcA (382 aa).

The next 4 helical transmembrane spans lie at 156-176 (TLIS…VQQV), 257-277 (AVKN…VCVF), 305-325 (IILF…TVLL), and 340-360 (FILL…KYWI).

Belongs to the CemA family.

It localises to the cell inner membrane. In terms of biological role, required for H(+) efflux immediately after light irradiation to form a rapid H(+) concentration gradient across the thylakoid membranes. Together with PxcL, contributes to transient H(+) uptake following dark to light transition. The sequence is that of Proton extrusion protein PxcA from Synechococcus sp. (strain WH7803).